The primary structure comprises 218 residues: NADH-ubiquinone oxidoreductase 21 kDa subunit, mitochondrial (218 aa).

The N-terminal 33 residues, 1–33, are a transit peptide targeting the mitochondrion; it reads MSALRITTASAARMLRTSNAMMPSVMGAAQRRA. The segment at 31–74 is disordered; it reads RRALSDSAEPARVPSVESARVPEKLAKEDSPLATPKRNSPDYNV. The span at 50-60 shows a compositional bias: basic and acidic residues; sequence RVPEKLAKEDS.

It belongs to the complex I NDUFS4 subunit family. In terms of assembly, complex I is composed of about 40 different subunits. This is a component of the iron-sulfur (IP) fragment of the enzyme.

The protein resides in the mitochondrion inner membrane. Functionally, accessory subunit of the mitochondrial membrane respiratory chain NADH dehydrogenase (Complex I), that is believed not to be involved in catalysis. Complex I functions in the transfer of electrons from NADH to the respiratory chain. The immediate electron acceptor for the enzyme is believed to be ubiquinone. This chain is NADH-ubiquinone oxidoreductase 21 kDa subunit, mitochondrial (nuo-21), found in Neurospora crassa (strain ATCC 24698 / 74-OR23-1A / CBS 708.71 / DSM 1257 / FGSC 987).